The primary structure comprises 47 residues: MAKGKRTFQPNNRRRARVHGFRLRMRTRAGRAIVSARRRKGRATLTA.

It belongs to the bacterial ribosomal protein bL34 family.

This Nocardia farcinica (strain IFM 10152) protein is Large ribosomal subunit protein bL34.